The following is a 295-amino-acid chain: GTPase Era (295 aa).

Residues Lys3–Glu170 form the Era-type G domain. The interval Gly11 to Ser18 is G1. Residue Gly11–Ser18 participates in GTP binding. Residues Gln37–Asn41 form a G2 region. The tract at residues Asp58–Gly61 is G3. Residues Asp58–Ile62 and Asn120–Asp123 contribute to the GTP site. Residues Asn120–Asp123 are G4. Residues Ile149 to Ala151 are G5. Residues Leu201–Lys278 form the KH type-2 domain.

It belongs to the TRAFAC class TrmE-Era-EngA-EngB-Septin-like GTPase superfamily. Era GTPase family. Monomer.

The protein resides in the cytoplasm. It localises to the cell membrane. Functionally, an essential GTPase that binds both GDP and GTP, with rapid nucleotide exchange. Plays a role in 16S rRNA processing and 30S ribosomal subunit biogenesis and possibly also in cell cycle regulation and energy metabolism. The sequence is that of GTPase Era from Clostridium botulinum (strain Eklund 17B / Type B).